The primary structure comprises 181 residues: UPF0397 protein SSU98_0390 (181 aa).

5 helical membrane passes run 9-29, 46-66, 70-90, 108-128, and 147-167; these read VVAT…INIP, LLAV…GHTL, LTYG…LVVG, ILFF…VIAP, and LVAG…LLVV.

It belongs to the UPF0397 family.

Its subcellular location is the cell membrane. This is UPF0397 protein SSU98_0390 from Streptococcus suis (strain 98HAH33).